The following is a 288-amino-acid chain: Scolexin B (288 aa).

Positions 1 to 20 (MFASKLAVCSALALLAVAHA) are cleaved as a signal peptide. One can recognise a Peptidase S1 domain in the interval 21–287 (APGGNDIQKI…VRDWIKKVTN (267 aa)). A disordered region spans residues 27 to 56 (IQKITKAPNVPTKAEGDAASKASAPAIPPK). Cys72 and Cys88 form a disulfide bridge. Catalysis depends on charge relay system residues His87 and Asp145. Intrachain disulfides connect Cys210–Cys223 and Cys235–Cys264. Catalysis depends on Ser239, which acts as the Charge relay system.

It belongs to the peptidase S1 family.

In Heliothis virescens (Tobacco budworm moth), this protein is Scolexin B.